Consider the following 182-residue polypeptide: Large ribosomal subunit protein uL16 (182 aa).

Belongs to the universal ribosomal protein uL16 family.

This chain is Large ribosomal subunit protein uL16, found in Pyrobaculum neutrophilum (strain DSM 2338 / JCM 9278 / NBRC 100436 / V24Sta) (Thermoproteus neutrophilus).